The primary structure comprises 532 residues: Flavin-containing monooxygenase 1 (532 aa).

The Lumenal segment spans residues 1 to 510 (MVKRVAIVGA…TRTVQETPST (510 aa)). Residues 9-13 (GAGVS), glutamate 32, 40-41 (LW), and 61-62 (NS) contribute to the FAD site. NADP(+)-binding positions include 60-61 (SN) and 195-198 (SGTD). A helical membrane pass occupies residues 511–531 (FETLLKLFSFLALLVAVFFIF). Position 532 (leucine 532) is a topological domain, cytoplasmic.

It belongs to the FMO family. Requires FAD as cofactor. As to expression, expressed in liver, lung and kidney and to a lesser extent in the heart and brain.

Its subcellular location is the endoplasmic reticulum membrane. The enzyme catalyses hypotaurine + NADPH + O2 + H(+) = taurine + NADP(+) + H2O. The catalysed reaction is hypotaurine + NADH + O2 + H(+) = taurine + NAD(+) + H2O. It carries out the reaction trimethylamine + NADPH + O2 = trimethylamine N-oxide + NADP(+) + H2O. It catalyses the reaction N,N-dimethylaniline + NADPH + O2 + H(+) = N,N-dimethylaniline N-oxide + NADP(+) + H2O. Broad spectrum monooxygenase that catalyzes the oxygenation of a wide variety of nitrogen- and sulfur-containing compounds including xenobiotics. Catalyzes the S-oxygenation of hypotaurine to produce taurine, an organic osmolyte involved in cell volume regulation as well as a variety of cytoprotective and developmental processes. In vitro, catalyzes the N-oxygenation of trimethylamine (TMA) to produce trimethylamine N-oxide (TMAO) and could therefore participate to the detoxification of this compound that is generated by the action of gut microbiota from dietary precursors such as choline, choline containing compounds, betaine or L-carnitine. In Rattus norvegicus (Rat), this protein is Flavin-containing monooxygenase 1.